Here is a 280-residue protein sequence, read N- to C-terminus: uncharacterized protein (280 aa).

3 disordered regions span residues 20–41, 170–199, and 251–280; these read DVKKSQQQQQQQPQAPPQQQQQ, INSPPPPQEEEKPQLSKKEEPEWLKGKDKA, and GNSKPYTSSNATNKPFTTASKSTNSYSFSF. Residues 25-41 are compositionally biased toward low complexity; that stretch reads QQQQQQQPQAPPQQQQQ. Positions 178-199 are enriched in basic and acidic residues; the sequence is EEEKPQLSKKEEPEWLKGKDKA.

This is an uncharacterized protein from Dictyostelium discoideum (Social amoeba).